A 326-amino-acid chain; its full sequence is MALTAAVKEELSRLEVRKSSVRKAEVSAMLRFAGGLHIISGRIVIEAEVDLAATARRVRVAIAELYGHQSEIIVVSGGGLRRGNRYVVRVVREGEALARQTGLLDSRGRPVRGLPSVVVNGSTADAEAVWRGAFLAHGSLTEPGRSSSMEVTCPGPEAALALVGSARRLGIAAKAREVRGVDRVVIRDGDTIAALLTRMGAHETLLVWEERRMRKEVRATANRLANFDDANLRRSAQAAVAAGARVDRALEILGDDVPEHLKYAGELRVAHKQASLDELGRLADPPMTKDAIAGRIRRLLAMADKRASDLGIPSTEANVTLEMLEE.

The segment at residues 275–308 (SLDELGRLADPPMTKDAIAGRIRRLLAMADKRAS) is a DNA-binding region (H-T-H motif).

The protein belongs to the WhiA family.

Its function is as follows. Involved in cell division and chromosome segregation. This Renibacterium salmoninarum (strain ATCC 33209 / DSM 20767 / JCM 11484 / NBRC 15589 / NCIMB 2235) protein is Probable cell division protein WhiA.